Reading from the N-terminus, the 367-residue chain is Mitogen-activated protein kinase 12 (367 aa).

The region spanning 27-311 (YRDLQPVGSG…AGEALAHPYF (285 aa)) is the Protein kinase domain. ATP is bound by residues 33–41 (VGSGAYGAV) and lysine 56. The Proton acceptor role is filled by aspartate 153. Residue threonine 183 is modified to Phosphothreonine; by MAP2K3 and MAP2K6. The TXY motif lies at 183–185 (TGY). Position 185 is a phosphotyrosine (tyrosine 185).

This sequence belongs to the protein kinase superfamily. CMGC Ser/Thr protein kinase family. MAP kinase subfamily. In terms of assembly, monomer. Interacts with the PDZ domain of the syntrophin SNTA1. Interacts with SH3BP5. Interacts with LIN7C, SCRIB and SYNJ2BP. Interacts with PTPN4; this interaction induces the activation of PTPN4 phosphatase activity. The cofactor is Mg(2+). Dually phosphorylated on Thr-183 and Tyr-185 by MAP2K3/MKK3 and MAP2K6/MKK6, which activates the enzyme. Post-translationally, ubiquitinated. Ubiquitination leads to degradation by the proteasome pathway. Highly expressed in skeletal muscle and heart.

Its subcellular location is the cytoplasm. The protein localises to the nucleus. It localises to the mitochondrion. It catalyses the reaction L-seryl-[protein] + ATP = O-phospho-L-seryl-[protein] + ADP + H(+). The enzyme catalyses L-threonyl-[protein] + ATP = O-phospho-L-threonyl-[protein] + ADP + H(+). With respect to regulation, activated by phosphorylation on threonine and tyrosine. MAP2K3/MKK3 and MAP2K6/MKK6 are both essential for the activation of MAPK12 induced by environmental stress, whereas MAP2K6/MKK6 is the major MAPK12 activator in response to TNF-alpha. In terms of biological role, serine/threonine kinase which acts as an essential component of the MAP kinase signal transduction pathway. MAPK12 is one of the four p38 MAPKs which play an important role in the cascades of cellular responses evoked by extracellular stimuli such as pro-inflammatory cytokines or physical stress leading to direct activation of transcription factors such as ELK1 and ATF2. Accordingly, p38 MAPKs phosphorylate a broad range of proteins and it has been estimated that they may have approximately 200 to 300 substrates each. Some of the targets are downstream kinases such as MAPKAPK2, which are activated through phosphorylation and further phosphorylate additional targets. Plays a role in myoblast differentiation and also in the down-regulation of cyclin D1 in response to hypoxia in adrenal cells suggesting MAPK12 may inhibit cell proliferation while promoting differentiation. Phosphorylates DLG1. Following osmotic shock, MAPK12 in the cell nucleus increases its association with nuclear DLG1, thereby causing dissociation of DLG1-SFPQ complexes. This function is independent of its catalytic activity and could affect mRNA processing and/or gene transcription to aid cell adaptation to osmolarity changes in the environment. Regulates UV-induced checkpoint signaling and repair of UV-induced DNA damage and G2 arrest after gamma-radiation exposure. MAPK12 is involved in the regulation of SLC2A1 expression and basal glucose uptake in L6 myotubes; and negatively regulates SLC2A4 expression and contraction-mediated glucose uptake in adult skeletal muscle. C-Jun (JUN) phosphorylation is stimulated by MAPK14 and inhibited by MAPK12, leading to a distinct AP-1 regulation. MAPK12 is required for the normal kinetochore localization of PLK1, prevents chromosomal instability and supports mitotic cell viability. MAPK12-signaling is also positively regulating the expansion of transient amplifying myogenic precursor cells during muscle growth and regeneration. The sequence is that of Mitogen-activated protein kinase 12 (MAPK12) from Homo sapiens (Human).